Reading from the N-terminus, the 647-residue chain is DNA mismatch repair protein MutL (647 aa).

Residues 375–433 (KQEEPQAVKQPTQLWQPPKQEWQPPQSLVREEQSWQPSTKPIIEEPIQEEKSWDSNEEG) form a disordered region. Residues 387–400 (QLWQPPKQEWQPPQ) are compositionally biased toward low complexity.

Belongs to the DNA mismatch repair MutL/HexB family.

Its function is as follows. This protein is involved in the repair of mismatches in DNA. It is required for dam-dependent methyl-directed DNA mismatch repair. May act as a 'molecular matchmaker', a protein that promotes the formation of a stable complex between two or more DNA-binding proteins in an ATP-dependent manner without itself being part of a final effector complex. In Bacillus cereus (strain AH820), this protein is DNA mismatch repair protein MutL.